A 445-amino-acid polypeptide reads, in one-letter code: Phosphoglucosamine mutase (445 aa).

S102 (phosphoserine intermediate) is an active-site residue. Positions 102, 241, 243, and 245 each coordinate Mg(2+). S102 is modified (phosphoserine).

Belongs to the phosphohexose mutase family. The cofactor is Mg(2+). In terms of processing, activated by phosphorylation.

The enzyme catalyses alpha-D-glucosamine 1-phosphate = D-glucosamine 6-phosphate. In terms of biological role, catalyzes the conversion of glucosamine-6-phosphate to glucosamine-1-phosphate. This is Phosphoglucosamine mutase from Zymomonas mobilis subsp. mobilis (strain ATCC 31821 / ZM4 / CP4).